Consider the following 480-residue polypeptide: NADH-quinone oxidoreductase subunit N (480 aa).

Transmembrane regions (helical) follow at residues 13–33, 41–61, 81–101, 107–127, 132–152, 167–187, 212–232, 245–265, 276–296, 314–334, 373–393, 413–433, and 454–474; these read ISPMLILCGVALLSLVVQFLI, PLWVLSILGILVAMYALYHTT, VWLSAIYLIAGLITLLVAPPF, TLFPEFFPLMLFCLSGMMFLT, LIVIFVGLEILSLSLYVMIGM, FLLGTFSSGFMLLGIAFLYGG, LGLGLFFVGVSFKAALVPFHS, ITGFMASAGKASALGLVIILF, VWKYLMGTIALISMTWGNIVA, AGYIVAGIACGAGLEALYYLF, ALALSLVFLSFAGFPPLIGFW, LLFGAVANSCIAFYYYMKITI, and PTLGFLIFLLCVFFTAGWIFF.

Belongs to the complex I subunit 2 family. As to quaternary structure, NDH-1 is composed of 14 different subunits. Subunits NuoA, H, J, K, L, M, N constitute the membrane sector of the complex.

It is found in the cell inner membrane. The catalysed reaction is a quinone + NADH + 5 H(+)(in) = a quinol + NAD(+) + 4 H(+)(out). NDH-1 shuttles electrons from NADH, via FMN and iron-sulfur (Fe-S) centers, to quinones in the respiratory chain. The immediate electron acceptor for the enzyme in this species is believed to be ubiquinone. Couples the redox reaction to proton translocation (for every two electrons transferred, four hydrogen ions are translocated across the cytoplasmic membrane), and thus conserves the redox energy in a proton gradient. The sequence is that of NADH-quinone oxidoreductase subunit N from Leptospira biflexa serovar Patoc (strain Patoc 1 / Ames).